Here is a 98-residue protein sequence, read N- to C-terminus: uncharacterized protein (98 aa).

The segment at 53–98 (AALEGGRHRHRGESASGNGIQHGVPPNVALIPSGSTLLTPARSGHV) is disordered.

This is an uncharacterized protein from Mycolicibacterium smegmatis (strain ATCC 700084 / mc(2)155) (Mycobacterium smegmatis).